The following is an 89-amino-acid chain: Small ribosomal subunit protein bS20 (89 aa).

The segment at M1–R25 is disordered.

It belongs to the bacterial ribosomal protein bS20 family.

In terms of biological role, binds directly to 16S ribosomal RNA. This is Small ribosomal subunit protein bS20 from Paracoccus denitrificans (strain Pd 1222).